A 729-amino-acid polypeptide reads, in one-letter code: Fatty acid oxidation complex subunit alpha (729 aa).

The interval 1–189 (MLYKGDTLYL…KIGLVDGVVK (189 aa)) is enoyl-CoA hydratase/isomerase. Residue D296 coordinates substrate. The 3-hydroxyacyl-CoA dehydrogenase stretch occupies residues 311-729 (ETPKQAAVLG…ARPVGSLKTA (419 aa)). NAD(+) contacts are provided by residues M324, D343, 400-402 (VVE), K407, and S429. The active-site For 3-hydroxyacyl-CoA dehydrogenase activity is H450. Residue N453 participates in NAD(+) binding. The substrate site is built by N500 and Y660. Residues 708 to 729 (RHNEPYYPPVEPARPVGSLKTA) form a disordered region.

In the N-terminal section; belongs to the enoyl-CoA hydratase/isomerase family. It in the C-terminal section; belongs to the 3-hydroxyacyl-CoA dehydrogenase family. Heterotetramer of two alpha chains (FadB) and two beta chains (FadA).

The catalysed reaction is a (3S)-3-hydroxyacyl-CoA + NAD(+) = a 3-oxoacyl-CoA + NADH + H(+). The enzyme catalyses a (3S)-3-hydroxyacyl-CoA = a (2E)-enoyl-CoA + H2O. It carries out the reaction a 4-saturated-(3S)-3-hydroxyacyl-CoA = a (3E)-enoyl-CoA + H2O. It catalyses the reaction (3S)-3-hydroxybutanoyl-CoA = (3R)-3-hydroxybutanoyl-CoA. The catalysed reaction is a (3Z)-enoyl-CoA = a 4-saturated (2E)-enoyl-CoA. The enzyme catalyses a (3E)-enoyl-CoA = a 4-saturated (2E)-enoyl-CoA. It functions in the pathway lipid metabolism; fatty acid beta-oxidation. Its function is as follows. Involved in the aerobic and anaerobic degradation of long-chain fatty acids via beta-oxidation cycle. Catalyzes the formation of 3-oxoacyl-CoA from enoyl-CoA via L-3-hydroxyacyl-CoA. It can also use D-3-hydroxyacyl-CoA and cis-3-enoyl-CoA as substrate. In Salmonella enteritidis PT4 (strain P125109), this protein is Fatty acid oxidation complex subunit alpha.